A 1330-amino-acid polypeptide reads, in one-letter code: MSRLIFEARRRLAPPSSHQGTIIIEAPPELPRVIPPSLLRRALPYLIGILIVGMIVALVATGMRVISPQTLFFPFVLLLAATALYRGNDKKMRTEEVDAERADYLRYLSVVRDNIRAQAAEQRASALWSHPDPTALASVPGSRRQWERDPHDPDFLVLRAGRHTVPLATTLRVNDTADEIDLEPVSHSALRSLLDTQRSIGDVPTGIDLTKVSRITVLGERAQVRAVLRAWIAQAVTWHDPTVLGVALAARDLEGRDWNWLKWLPHVDIPGRLDALGPARNLSTDPDELIALLGPVLADRPAFTGQPTDALRHLLIVVDDPDYDLGASPLAVGRAGVTVVHCSASAPHREQYSDPEKPILRVAHGAIERWQTGGWQPYIDAADQFSADEAAHLARRLSRWDSNPTHAGLRSAATRGASFTTLLGIEDASRLDVPALWAPRRRDEELRVPIGVTGTGEPLMFDLKDEAEGGMGPHGLMIGMTGSGKSQTLMSILLSLLTTHSAERLIVIYADFKGEAGADSFRDFPQVVAVISNMAEKKSLADRFADTLRGEVARREMLLREAGRKVQGSAFNSVLEYENAIAAGHSLPPIPTLFVVADEFTLMLADHPEYAELFDYVARKGRSFRIHILFASQTLDVGKIKDIDKNTAYRIGLKVASPSVSRQIIGVEDAYHIESGKEHKGVGFLVPAPGATPIRFRSTYVDGIYEPPQTAKAVVVQSVPEPKLFTAAAVEPDPGTVIADTDEQEPADPPRKLIATIGEQLARYGPRAPQLWLPPLDETIPLSAALARAGVGPRQWRWPLGEIDRPFEMRRDPLVFDARSSAGNMVIHGGPKSGKSTALQTFILSAASLHSPHEVSFYCLDYGGGQLRALQDLAHVGSVASALEPERIRRTFGELEQLLLSRQQREVFRDRGANGSTPDDGFGEVFLVIDNLYGFGRDNTDQFNTRNPLLARVTELVNVGLAYGIHVIITTPSWLEVPLAMRDGLGLRLELRLHDARDSNVRVVGALRRPADAVPHDQPGRGLTMAAEHFLFAAPELDAQTNPVAAINARYPGMAAPPVRLLPTNLAPHAVGELYRGPDQLVIGQREEDLAPVILDLAANPLLMVFGDARSGKTTLLRHIIRTVREHSTADRVAFTVLDRRLHLVDEPLFPDNEYTANIDRIIPAMLGLANLIEARRPPAGMSAAELSRWTFAGHTHYLIIDDVDQVPDSPAMTGPYIGQRPWTPLIGLLAQAGDLGLRVIVTGRATGSAHLLMTSPLLRRFNDLQATTLMLAGNPADSGKIRGERFARLPAGRAILLTDSDSPTYVQLINPLVDAAAVSGETQQKGSQS.

A run of 2 helical transmembrane segments spans residues 43–63 and 65–85; these read LPYL…ATGM and VISP…TALY. FtsK domains lie at 456-662, 811-1000, and 1090-1280; these read GEPL…SVSR, RDPL…RDSN, and LAPV…ADSG. ATP-binding positions include 479–486, 829–836, and 1107–1114; these read GMTGSGKS, GGPKSGKS, and GDARSGKT.

As to quaternary structure, part of the ESX-3 / type VII secretion system (T7SS), which is composed of cytosolic and membrane components. The ESX-3 membrane complex is composed of EccB3, EccC3, EccD3 and EccE3.

The protein localises to the cell inner membrane. Its function is as follows. Part of the ESX-3 specialized secretion system, which is important for iron and zinc uptake or homeostasis. In Mycobacterium tuberculosis (strain CDC 1551 / Oshkosh), this protein is ESX-3 secretion system protein EccC3.